The chain runs to 249 residues: MAIRKEIGIIIQSKDIGESDRLISLAGETQVRMNFISKGIRKSKRRAIISTELGCLVEVDYYDQVEKDWKSTKEIHLIKRYDELKKDYVGTLFVLYLTELTSQLYPDGENHPFLYQLLSGSLEVSNENGFRKEILPFFKLRALTHMGHFPTEFYCHTCGEEVLTKAKAYFSVDSREFLCSDCHPITKDHLPVLKLFHTMLSKKFSNVLVIFPKEAEYREGDMILNQFLRSLLGRELKSYFEFYKTIGDL.

Belongs to the RecO family.

Its function is as follows. Involved in DNA repair and RecF pathway recombination. This Leptospira biflexa serovar Patoc (strain Patoc 1 / Ames) protein is DNA repair protein RecO.